The chain runs to 38 residues: Large ribosomal subunit protein bL36 (38 aa).

It belongs to the bacterial ribosomal protein bL36 family.

This chain is Large ribosomal subunit protein bL36, found in Buchnera aphidicola subsp. Cinara cedri (strain Cc).